The chain runs to 216 residues: Glycerol-3-phosphate acyltransferase (216 aa).

The next 5 membrane-spanning stretches (helical) occupy residues 5–25, 70–90, 118–138, 140–160, and 164–184; these read LIALAAAAGGYLFGSIPFGLV, IAAAVFGYFLGTTAGLVAGAF, VVFWPVGLTVIATWLAMAAIF, ISSLAALAAALAAPFAALAWG, and VAIMAGLLTVLIYWLHRANIS. A compositionally biased stretch (basic and acidic residues) spans 192-201; that stretch reads PRIGGKKSET. A disordered region spans residues 192-216; the sequence is PRIGGKKSETSADVSDGDDPDTPAT. Positions 206–216 are enriched in acidic residues; sequence SDGDDPDTPAT.

This sequence belongs to the PlsY family. In terms of assembly, probably interacts with PlsX.

Its subcellular location is the cell inner membrane. The catalysed reaction is an acyl phosphate + sn-glycerol 3-phosphate = a 1-acyl-sn-glycero-3-phosphate + phosphate. Its pathway is lipid metabolism; phospholipid metabolism. Its function is as follows. Catalyzes the transfer of an acyl group from acyl-phosphate (acyl-PO(4)) to glycerol-3-phosphate (G3P) to form lysophosphatidic acid (LPA). This enzyme utilizes acyl-phosphate as fatty acyl donor, but not acyl-CoA or acyl-ACP. The chain is Glycerol-3-phosphate acyltransferase from Maricaulis maris (strain MCS10) (Caulobacter maris).